Reading from the N-terminus, the 367-residue chain is Indole glucosinolate O-methyltransferase 5 (367 aa).

S-adenosyl-L-homocysteine is bound by residues G209, D232, D252, M253, and K266. Residue H270 is the Proton acceptor of the active site.

The protein belongs to the class I-like SAM-binding methyltransferase superfamily. Cation-independent O-methyltransferase family.

It participates in secondary metabolite biosynthesis. In terms of biological role, involved in indole glucosinolate biosynthesis. Catalyzes methoxylation reactions of the glucosinolate indole ring. Converts the hydroxy intermediates 4-hydroxy-indol-3-yl-methylglucosinolate (4OH-I3M) and 1-hydroxy-indol-3-yl-methylglucosinolate (1OH-I3M) to 4-methoxy-indol-3-yl-methylglucosinolate (4MO-I3M) and 1-methoxy-indol-3-yl-methylglucosinolate, respectively. This is Indole glucosinolate O-methyltransferase 5 from Arabidopsis thaliana (Mouse-ear cress).